The following is a 369-amino-acid chain: Peridinin-chlorophyll a-binding protein 2, chloroplastic (369 aa).

The N-terminal 56 residues, 1-56, are a transit peptide targeting the chloroplast; that stretch reads MVRSGKKAVVLATVAFCATSVVQKTCGFVPSPLRQRAAAAGAAASVATMFAPAAFA. 2 repeat units span residues 57-219 and 220-369.

As to quaternary structure, homotrimer.

It localises to the plastid. The protein resides in the chloroplast. In terms of biological role, water-soluble antenna for capture of solar energy in the blue-green range. Peridinin is an asymmetric carotenoid. This Amphidinium carterae (Dinoflagellate) protein is Peridinin-chlorophyll a-binding protein 2, chloroplastic.